The chain runs to 157 residues: Nascent polypeptide-associated complex subunit alpha (157 aa).

One can recognise an NAC-A/B domain in the interval 6-71 (TTDESHIHKT…LGSPVNLHQL (66 aa)). The span at 81–107 (SSKDQEGPGLYDEIHSDPQEDGVKEAE) shows a compositional bias: basic and acidic residues. Positions 81-116 (SSKDQEGPGLYDEIHSDPQEDGVKEAEEITVDPSDE) are disordered. The region spanning 118–157 (LSEEDIKLISSQVKASRNDIIKALVESEYDVVDAMMKLTK) is the UBA domain.

Belongs to the NAC-alpha family.

It localises to the cytoplasm. Its subcellular location is the nucleus. Functionally, may be involved in mitochondrial protein import by enhancing productive ribosome interactions with the outer mitochondrial membrane and blocks the inappropriate interaction of ribosomes translating non-secretory nascent polypeptides with translocation sites in the membrane of the endoplasmic reticulum. EGD2 may also be involved in transcription regulation. This is Nascent polypeptide-associated complex subunit alpha (EGD2) from Encephalitozoon cuniculi (strain GB-M1) (Microsporidian parasite).